Here is a 295-residue protein sequence, read N- to C-terminus: tRNA dimethylallyltransferase (295 aa).

11 to 18 (GPTVSGKS) contacts ATP. 13-18 (TVSGKS) lines the substrate pocket. 2 interaction with substrate tRNA regions span residues 36–39 (DSMQ) and 158–162 (QRIIR).

It belongs to the IPP transferase family. In terms of assembly, monomer. It depends on Mg(2+) as a cofactor.

It catalyses the reaction adenosine(37) in tRNA + dimethylallyl diphosphate = N(6)-dimethylallyladenosine(37) in tRNA + diphosphate. In terms of biological role, catalyzes the transfer of a dimethylallyl group onto the adenine at position 37 in tRNAs that read codons beginning with uridine, leading to the formation of N6-(dimethylallyl)adenosine (i(6)A). The sequence is that of tRNA dimethylallyltransferase from Bartonella quintana (strain Toulouse) (Rochalimaea quintana).